A 480-amino-acid polypeptide reads, in one-letter code: Glycogen synthase (480 aa).

Lys-15 provides a ligand contact to ADP-alpha-D-glucose.

This sequence belongs to the glycosyltransferase 1 family. Bacterial/plant glycogen synthase subfamily.

It carries out the reaction [(1-&gt;4)-alpha-D-glucosyl](n) + ADP-alpha-D-glucose = [(1-&gt;4)-alpha-D-glucosyl](n+1) + ADP + H(+). The protein operates within glycan biosynthesis; glycogen biosynthesis. Functionally, synthesizes alpha-1,4-glucan chains using ADP-glucose. This chain is Glycogen synthase, found in Clostridioides difficile (strain 630) (Peptoclostridium difficile).